A 178-amino-acid chain; its full sequence is ATP synthase subunit delta (178 aa).

It belongs to the ATPase delta chain family. In terms of assembly, F-type ATPases have 2 components, F(1) - the catalytic core - and F(0) - the membrane proton channel. F(1) has five subunits: alpha(3), beta(3), gamma(1), delta(1), epsilon(1). F(0) has three main subunits: a(1), b(2) and c(10-14). The alpha and beta chains form an alternating ring which encloses part of the gamma chain. F(1) is attached to F(0) by a central stalk formed by the gamma and epsilon chains, while a peripheral stalk is formed by the delta and b chains.

It is found in the cell membrane. Its function is as follows. F(1)F(0) ATP synthase produces ATP from ADP in the presence of a proton or sodium gradient. F-type ATPases consist of two structural domains, F(1) containing the extramembraneous catalytic core and F(0) containing the membrane proton channel, linked together by a central stalk and a peripheral stalk. During catalysis, ATP synthesis in the catalytic domain of F(1) is coupled via a rotary mechanism of the central stalk subunits to proton translocation. Functionally, this protein is part of the stalk that links CF(0) to CF(1). It either transmits conformational changes from CF(0) to CF(1) or is implicated in proton conduction. This chain is ATP synthase subunit delta, found in Streptococcus sanguinis (strain SK36).